A 144-amino-acid polypeptide reads, in one-letter code: Large ribosomal subunit protein uL15 (144 aa).

The interval 1–52 (MRLNTLSPAEGAKHAPKRVGRGIGSGLGKTAGRGHKGQNSRSGGGVRRGFEG) is disordered. A compositionally biased stretch (gly residues) spans 21-31 (RGIGSGLGKTA).

It belongs to the universal ribosomal protein uL15 family. Part of the 50S ribosomal subunit.

Functionally, binds to the 23S rRNA. The protein is Large ribosomal subunit protein uL15 of Yersinia enterocolitica serotype O:8 / biotype 1B (strain NCTC 13174 / 8081).